The following is a 224-amino-acid chain: Lipoprotein-releasing system ATP-binding protein LolD (224 aa).

The ABC transporter domain occupies 5–224; sequence LRAENIKKVI…GKVVGEITRV (220 aa). 37–44 contacts ATP; that stretch reads GASGSGKS.

It belongs to the ABC transporter superfamily. Lipoprotein translocase (TC 3.A.1.125) family. The complex is composed of two ATP-binding proteins (LolD) and two transmembrane proteins (LolC and LolE).

Its subcellular location is the cell inner membrane. Part of the ABC transporter complex LolCDE involved in the translocation of mature outer membrane-directed lipoproteins, from the inner membrane to the periplasmic chaperone, LolA. Responsible for the formation of the LolA-lipoprotein complex in an ATP-dependent manner. This chain is Lipoprotein-releasing system ATP-binding protein LolD, found in Aquifex aeolicus (strain VF5).